We begin with the raw amino-acid sequence, 299 residues long: Probable lipid kinase YegS-like (299 aa).

The DAGKc domain maps to 2–133; sequence SRSAGSFLIL…IDIAHVNDKT (132 aa). Residues threonine 40, 66-72, and threonine 95 each bind ATP; that span reads GDGTINE. Residues leucine 215, aspartate 218, and leucine 220 each coordinate Mg(2+). Glutamate 271 functions as the Proton acceptor in the catalytic mechanism.

It belongs to the diacylglycerol/lipid kinase family. YegS lipid kinase subfamily. Requires Mg(2+) as cofactor. Ca(2+) is required as a cofactor.

The protein localises to the cytoplasm. In terms of biological role, probably phosphorylates lipids; the in vivo substrate is unknown. In Cronobacter sakazakii (strain ATCC BAA-894) (Enterobacter sakazakii), this protein is Probable lipid kinase YegS-like.